Reading from the N-terminus, the 302-residue chain is MYYGFDVGGTKIEFGAFNEKLERVATERVPTPTEDYQLLLDTIAGLVKKYDNEFSCEGKIGLGLPGMEDADDGTMLVVNVPASTGKPLRKDLEALIGRSVKIENDANCFALSEAWDDELKDEPSVAGLILGTGFGGGLVYEGKVFSGRNHVAGELGHMRLPLDAWFHLGDNAPLLGCGCGKKGCLDSYLSGRGFELIYEHYFGEKKKAIEIIQAYNEGESKAAEHVDRFMELLAICFANLFTGLDPHVVALGGGLSNFELIYEEMPKRIPKYLLSVAKCPKIIKAKHGDSGGVRGAAFLNIK.

ATP-binding positions include 4-11 (GFDVGGTK) and 133-140 (GFGGGLVY). Zn(2+) is bound by residues H157, C177, C179, and C184.

The protein belongs to the ROK (NagC/XylR) family. NagK subfamily.

The catalysed reaction is N-acetyl-D-glucosamine + ATP = N-acetyl-D-glucosamine 6-phosphate + ADP + H(+). It participates in cell wall biogenesis; peptidoglycan recycling. Functionally, catalyzes the phosphorylation of N-acetyl-D-glucosamine (GlcNAc) derived from cell-wall degradation, yielding GlcNAc-6-P. This Vibrio atlanticus (strain LGP32) (Vibrio splendidus (strain Mel32)) protein is N-acetyl-D-glucosamine kinase.